The following is a 216-amino-acid chain: MTDLPILHVKNLGKADYQPVWQAMKDFTDGRDAHTPDELWLVEHPPVFTQGQAGKAEHLLAPGAIPVVATDRGGQVTYHGPGQLVAYPLLDLRRLKIGVRELVTKIEQSVVALLAEYKIDSAPKADAPGVYVNGDKIASLGLRVRKGCSFHGVAINVDVDLAPFNQINPCGYAGLNMTRLVDLVDTTKQPVVFSDVAKRYTRILSNILGLTAQLKE.

The 180-residue stretch at 33–212 folds into the BPL/LPL catalytic domain; sequence AHTPDELWLV…ILSNILGLTA (180 aa). Substrate contacts are provided by residues 72-79, 139-141, and 152-154; these read RGGQVTYH, SLG, and GVA. Residue cysteine 170 is the Acyl-thioester intermediate of the active site.

The protein belongs to the LipB family.

The protein localises to the cytoplasm. It catalyses the reaction octanoyl-[ACP] + L-lysyl-[protein] = N(6)-octanoyl-L-lysyl-[protein] + holo-[ACP] + H(+). It participates in protein modification; protein lipoylation via endogenous pathway; protein N(6)-(lipoyl)lysine from octanoyl-[acyl-carrier-protein]: step 1/2. In terms of biological role, catalyzes the transfer of endogenously produced octanoic acid from octanoyl-acyl-carrier-protein onto the lipoyl domains of lipoate-dependent enzymes. Lipoyl-ACP can also act as a substrate although octanoyl-ACP is likely to be the physiological substrate. This Saccharophagus degradans (strain 2-40 / ATCC 43961 / DSM 17024) protein is Octanoyltransferase.